Here is a 632-residue protein sequence, read N- to C-terminus: Phosphomethylpyrimidine synthase (632 aa).

Residues N237, M266, Y295, H331, 351–353, 392–395, and E431 contribute to the substrate site; these read SRG and DGLR. H435 lines the Zn(2+) pocket. A substrate-binding site is contributed by Y458. H499 provides a ligand contact to Zn(2+). Positions 579, 582, and 587 each coordinate [4Fe-4S] cluster.

Belongs to the ThiC family. Homodimer. The cofactor is [4Fe-4S] cluster.

The catalysed reaction is 5-amino-1-(5-phospho-beta-D-ribosyl)imidazole + S-adenosyl-L-methionine = 4-amino-2-methyl-5-(phosphooxymethyl)pyrimidine + CO + 5'-deoxyadenosine + formate + L-methionine + 3 H(+). The protein operates within cofactor biosynthesis; thiamine diphosphate biosynthesis. Catalyzes the synthesis of the hydroxymethylpyrimidine phosphate (HMP-P) moiety of thiamine from aminoimidazole ribotide (AIR) in a radical S-adenosyl-L-methionine (SAM)-dependent reaction. The protein is Phosphomethylpyrimidine synthase of Nitrosomonas eutropha (strain DSM 101675 / C91 / Nm57).